The sequence spans 805 residues: Replication restart protein PriA (805 aa).

Positions 1–110 (MNFAEVIVDV…QAMLPAALKA (110 aa)) are 3'BD. Residues 111–166 (KYEKELKIAHGADLPPQVERLFSETKTLLYSDIPDHETLKLIQRHVQKGDIDVTYK) form a linker region. Residues 167 to 253 (VAQKTNKKMV…KESYEEVYRD (87 aa)) form a WH region. The 167-residue stretch at 282–448 (TLDSDEHKVF…QKGVYELLSL (167 aa)) folds into the Helicase ATP-binding domain. 295-302 (GVTGSGKT) serves as a coordination point for ATP. The short motif at 391–394 (DEEH) is the DEAH box element. The Zn(2+) site is built by Cys510, Cys513, Cys519, Cys522, Cys537, Cys540, Cys550, and Cys553. A Helicase C-terminal domain is found at 545-699 (PVPHTCPECA…TFYQHEMAHR (155 aa)).

It belongs to the helicase family. PriA subfamily. As to quaternary structure, monomer. Component of the replication restart primosome which assembles in this order; PriA, DnaD then DnaB. The preferred DNA substrate mimics an arrested DNA replication fork with unreplicated lagging strand. Interacts with DnaD but not DnaB. Interacts with SSB (sbbA) via the latter's 35 residue C-terminal tail which tethers PriA to ssDNA. Colocalizes with DNA pol III subunit gamma/tau (dnaX). May interact with RarA. Zn(2+) serves as cofactor.

It is found in the cytoplasm. It localises to the nucleoid. The catalysed reaction is Couples ATP hydrolysis with the unwinding of duplex DNA by translocating in the 3'-5' direction.. It catalyses the reaction ATP + H2O = ADP + phosphate + H(+). Its function is as follows. Initiates the restart of stalled replication forks, which reloads the replicative helicase on sites other than the origin of replication. Recognizes and binds to abandoned replication forks and remodels them to uncover a helicase loading site. Promotes assembly of the primosome at these replication forks. Serves as the initiating protein for assembly of the replication restart primosome; binding of PriA to an arrested DNA replication fork with unreplicated lagging strand triggers assembly. Sequentially DnaD (possibly as a dimer) and DnaB homotetramers bind. Assembly probably continues by loading of the DnaC replicative helicase aided by helicase loader DnaI. A single-strand (ss)DNA-dependent ATPase with helicase activity. Recognizes and binds the arrested nascent DNA chain at stalled replication forks. Binds forked DNA substrates and makes a larger complex with RarA; RarA has no effect on the helicase function. Binds ssDNA, D-loops and replication fork-like substrates but not double-stranded (ds)DNA; the preferred DNA substrate mimics an arrested DNA replication fork with an unreplicated lagging strand. Recognizes nicked dsDNA. A supershift on ssDNA occurs in the presence of single-stranded binding protein (SSB). Cannot substitute for E.coli PriA. Required for replication of plasmids that have a rolling circle mechanism, which produces circular single-stranded (ss)DNA intermediates corresponding to the lagging strand template, which are then converted into double-stranded (ds)DNA; priA is required to activate the conversion of ssDNA into dsDNA. In Bacillus subtilis (strain 168), this protein is Replication restart protein PriA.